The sequence spans 691 residues: Menaquinone reductase, molybdopterin-binding-like subunit (691 aa).

The segment at residues 1–27 (MALDRRGFLKFIGGATAGILATPVVWK) is a signal peptide (tat-type signal). Positions 50 to 106 (NSYVPTVSKLCPTGIGVRVRLVDGRPVRVIGNPEHPLSKGGVSSIAAAEVQMLYSPA) constitute a 4Fe-4S Mo/W bis-MGD-type domain.

It belongs to the prokaryotic molybdopterin-containing oxidoreductase family. In terms of assembly, the Qrc complex is composed of four subunits: QrcA, QrcB, QrcC and QrcD. Can form a supercomplex with the [NiFe] hydrogenase HynA1 and the tetraheme Type I cytochrome c3 TpIc(3), its physiological electron donors. There is no molybdenum or tungsten pterin cofactor present in the Qrc complex, despite the similarity of QrcB to molybdopterin-containing oxidoreductases. serves as cofactor. In terms of processing, predicted to be exported by the Tat system. The position of the signal peptide cleavage has not been experimentally proven.

The protein localises to the periplasm. In terms of biological role, component of the respiratory Qrc complex, that catalyzes the reduction of the menaquinone pool using electrons transferred from the reduced periplasmic cytochrome c3, and which is probably involved in sulfate respiration. Is likely essential for growth on H(2) or formate since the periplasmic hydrogenases and/or formate dehydrogenases act as primary electron donors for the Qrc complex. The function of the QrcB subunit is unknown; in the absence of a catalytic site, it may provide a structural scaffold for the other subunits. The chain is Menaquinone reductase, molybdopterin-binding-like subunit from Nitratidesulfovibrio vulgaris (strain ATCC 29579 / DSM 644 / CCUG 34227 / NCIMB 8303 / VKM B-1760 / Hildenborough) (Desulfovibrio vulgaris).